The sequence spans 226 residues: CD9 antigen (226 aa).

Residues 1–12 lie on the Cytoplasmic side of the membrane; it reads MPVKGGTKCIKY. The S-palmitoyl cysteine moiety is linked to residue C9. The chain crosses the membrane as a helical span at residues 13–33; the sequence is LLFGFNFIFWLAGIAVLAVGL. The Extracellular segment spans residues 34–53; that stretch reads WLRFDSQTKSIFEQDSQPSS. A helical membrane pass occupies residues 54-74; it reads FYTGVYILIGAGALMMLVGFL. The Cytoplasmic segment spans residues 75-85; that stretch reads GCCGAVQESQC. Residues C76, C77, and C85 are each lipidated (S-palmitoyl cysteine). The helical transmembrane segment at 86-109 threads the bilayer; it reads MLGLFFGFLLVIFAIEIAAAIWGY. The Extracellular segment spans residues 110 to 193; the sequence is SHKDEVIQEV…KEVFHNKFHI (84 aa). Disulfide bonds link C150–C179 and C151–C165. The chain crosses the membrane as a helical span at residues 194-219; it reads IGAVGIGIAVVMIFGMIFSMILCCAI. 2 S-palmitoyl cysteine lipidation sites follow: C216 and C217. The Cytoplasmic portion of the chain corresponds to 220-226; it reads RRSREMV.

Belongs to the tetraspanin (TM4SF) family. Forms both disulfide-linked homodimers and higher homooligomers as well as heterooligomers with other members of the tetraspanin family. Interacts (via the second extracellular domain) with integrin ITGAV:ITGB3. Interacts with integrin ITGA6:ITGB1; interaction takes place in oocytes and is involved in sperm-egg fusion. Part of integrin-tetraspanin complexes composed of CD81, beta-1 and beta-2 integrins in the membrane of monocyte/macrophages. Interacts with CD63; identified in a complex with CD63 and ITGB3. Associates with CR2/CD21 and with PTGFRN/CD9P1. Part of a complex composed of CD9, CD81, PTGFRN and IGSF8. Interacts directly with IGSF8. Interacts with PDPN; this interaction is homophilic and attenuates platelet aggregation and pulmonary metastasis induced by PDPN. Interacts (on T cell side) with CD81 at immunological synapses between antigen-presenting cells and T cells. In terms of processing, palmitoylated at a low, basal level in unstimulated platelets. The level of palmitoylation increases when platelets are activated by thrombin (in vitro). The protein exists in three forms with molecular masses between 22 and 27 kDa, and is known to carry covalently linked fatty acids. Palmitoylation by ZDHHC2 regulates CD9 expression, association with other tetraspanin family proteins and function in cell adhesion.

It is found in the cell membrane. The protein localises to the membrane. The protein resides in the secreted. Its subcellular location is the extracellular exosome. Integral membrane protein associated with integrins, which regulates different processes, such as sperm-egg fusion, platelet activation and aggregation, and cell adhesion. Present at the cell surface of oocytes and plays a key role in sperm-egg fusion, possibly by organizing multiprotein complexes and the morphology of the membrane required for the fusion. In myoblasts, associates with CD81 and PTGFRN and inhibits myotube fusion during muscle regeneration. In macrophages, associates with CD81 and beta-1 and beta-2 integrins, and prevents macrophage fusion into multinucleated giant cells specialized in ingesting complement-opsonized large particles. Also prevents the fusion between mononuclear cell progenitors into osteoclasts in charge of bone resorption. Acts as a receptor for PSG17. Involved in platelet activation and aggregation. Regulates paranodal junction formation. Involved in cell adhesion, cell motility and tumor metastasis. The polypeptide is CD9 antigen (Felis catus (Cat)).